Here is a 314-residue protein sequence, read N- to C-terminus: Short-chain dehydrogenase/reductase sthC (314 aa).

Residues 1-10 are compositionally biased toward polar residues; that stretch reads MAPAETTGNV. Residues 1–27 form a disordered region; sequence MAPAETTGNVQRPEAGKQSMGSFWTQM. NADP(+) contacts are provided by V56, K80, D105, N132, and R167. S191 acts as the Proton donor in catalysis. Y222 and K226 together coordinate NADP(+). Y222 (proton acceptor) is an active-site residue. K226 functions as the Lowers pKa of active site Tyr in the catalytic mechanism.

The protein belongs to the short-chain dehydrogenases/reductases (SDR) family.

It catalyses the reaction dehydroprobetaenone I + AH2 = probetaenone I + A. The enzyme catalyses betaenone C + AH2 = betaenone B + A. It participates in mycotoxin biosynthesis. Functionally, short-chain dehydrogenase/reductase; part of the gene cluster that mediates the biosynthesis of the phytotoxin stemphyloxin II. The first step of the pathway is the synthesis of dehydroprobetaenone I by the polyketide synthase sthA and the enoyl reductase sthE via condensation of one acetyl-CoA starter unit with 7 malonyl-CoA units and 5 methylations. The C-terminal reductase (R) domain of sthA catalyzes the reductive release of the polyketide chain. Because sthA lacks a designated enoylreductase (ER) domain, the required activity is provided the enoyl reductase sthE. The short-chain dehydrogenase/reductase sthC then catalyzes reduction of dehydroprobetaenone I to probetaenone I. The cytochrome P450 monooxygenase sthF catalyzes successive epoxidation, oxidation (resulting from epoxide opening) and hydroxylation to install a tertiary alcohol in the decaline ring to yield betaenone C from dehydroprobetaenone I and betaenone B from probetaenone I. The FAD-linked oxidoreductase sthB is responsible for the conversion of betaenone C to betaenone A via an intramolecular aldol reaction between C-1 and C-17 to form the bridged tricyclic system in betaenone A. Finally, the cytochrome P450 monooxygenase sthD catalyzes the hydroxylation of C-15 to afford the final metabolite stemphyloxin II. The protein is Short-chain dehydrogenase/reductase sthC of Phaeosphaeria nodorum (strain SN15 / ATCC MYA-4574 / FGSC 10173) (Glume blotch fungus).